Reading from the N-terminus, the 298-residue chain is Tyrosine recombinase XerC (298 aa).

In terms of domain architecture, Core-binding (CB) spans 1–83 (MHAAVERFLH…ALSRFADHLV (83 aa)). Positions 104-283 (HLPRPVDVDQ…DWQHLADAYD (180 aa)) constitute a Tyr recombinase domain. Residues Arg-144, Lys-166, His-235, Arg-238, and His-261 contribute to the active site. The O-(3'-phospho-DNA)-tyrosine intermediate role is filled by Tyr-270.

This sequence belongs to the 'phage' integrase family. XerC subfamily. Forms a cyclic heterotetrameric complex composed of two molecules of XerC and two molecules of XerD.

Its subcellular location is the cytoplasm. In terms of biological role, site-specific tyrosine recombinase, which acts by catalyzing the cutting and rejoining of the recombining DNA molecules. The XerC-XerD complex is essential to convert dimers of the bacterial chromosome into monomers to permit their segregation at cell division. It also contributes to the segregational stability of plasmids. This chain is Tyrosine recombinase XerC, found in Chromohalobacter salexigens (strain ATCC BAA-138 / DSM 3043 / CIP 106854 / NCIMB 13768 / 1H11).